The chain runs to 451 residues: Uronate isomerase (451 aa).

Belongs to the metallo-dependent hydrolases superfamily. Uronate isomerase family.

It carries out the reaction D-glucuronate = D-fructuronate. It catalyses the reaction aldehydo-D-galacturonate = keto-D-tagaturonate. Its pathway is carbohydrate metabolism; pentose and glucuronate interconversion. The polypeptide is Uronate isomerase (Thermotoga neapolitana (strain ATCC 49049 / DSM 4359 / NBRC 107923 / NS-E)).